The chain runs to 92 residues: Small ribosomal subunit protein uS19 (92 aa).

Belongs to the universal ribosomal protein uS19 family.

Its function is as follows. Protein S19 forms a complex with S13 that binds strongly to the 16S ribosomal RNA. The polypeptide is Small ribosomal subunit protein uS19 (Pectobacterium atrosepticum (strain SCRI 1043 / ATCC BAA-672) (Erwinia carotovora subsp. atroseptica)).